Reading from the N-terminus, the 325-residue chain is Elongation factor P--(R)-beta-lysine ligase (325 aa).

76-78 (SPE) is a binding site for substrate. ATP is bound by residues 100–102 (RNE) and N109. Substrate is bound at residue Y118. 244–245 (EL) is a binding site for ATP. Substrate is bound at residue E251. Position 300 (G300) interacts with ATP.

It belongs to the class-II aminoacyl-tRNA synthetase family. EpmA subfamily. As to quaternary structure, homodimer.

The enzyme catalyses D-beta-lysine + L-lysyl-[protein] + ATP = N(6)-((3R)-3,6-diaminohexanoyl)-L-lysyl-[protein] + AMP + diphosphate + H(+). In terms of biological role, with EpmB is involved in the beta-lysylation step of the post-translational modification of translation elongation factor P (EF-P). Catalyzes the ATP-dependent activation of (R)-beta-lysine produced by EpmB, forming a lysyl-adenylate, from which the beta-lysyl moiety is then transferred to the epsilon-amino group of a conserved specific lysine residue in EF-P. The protein is Elongation factor P--(R)-beta-lysine ligase of Hamiltonella defensa subsp. Acyrthosiphon pisum (strain 5AT).